Consider the following 72-residue polypeptide: Translation initiation factor IF-1 1 (72 aa).

In terms of domain architecture, S1-like spans 1–72; the sequence is MSKDDVIQMQ…TRARIVFRSK (72 aa).

The protein belongs to the IF-1 family. Component of the 30S ribosomal translation pre-initiation complex which assembles on the 30S ribosome in the order IF-2 and IF-3, IF-1 and N-formylmethionyl-tRNA(fMet); mRNA recruitment can occur at any time during PIC assembly.

Its subcellular location is the cytoplasm. Functionally, one of the essential components for the initiation of protein synthesis. Stabilizes the binding of IF-2 and IF-3 on the 30S subunit to which N-formylmethionyl-tRNA(fMet) subsequently binds. Helps modulate mRNA selection, yielding the 30S pre-initiation complex (PIC). Upon addition of the 50S ribosomal subunit IF-1, IF-2 and IF-3 are released leaving the mature 70S translation initiation complex. The sequence is that of Translation initiation factor IF-1 1 from Bordetella avium (strain 197N).